A 170-amino-acid chain; its full sequence is MNPMEEVIIDKVVVNIGVGQAGDRLTKAAKVLEMLTGHKATNTLAKKSIRDFNIRKRLPIGVKVTLRKKDAMEFLQKAFYVKDYKITDYSFDKHGNAYFGISDYTDFKGMKYDPDIGIFGMDVAIVFRRRGGYRIERRRIGSKTIPNSIRVRKEEAQDFLQKNFKVTVVR.

The protein belongs to the universal ribosomal protein uL5 family. As to quaternary structure, part of the 50S ribosomal subunit; contacts the 5S rRNA and probably tRNA. Forms a bridge to the 30S subunit in the 70S ribosome.

This is one of the proteins that bind and probably mediate the attachment of the 5S RNA into the large ribosomal subunit, where it forms part of the central protuberance. In the 70S ribosome it contacts protein S13 of the 30S subunit (bridge B1b), connecting the 2 subunits; this bridge is implicated in subunit movement. May contact the P site tRNA; the 5S rRNA and some of its associated proteins might help stabilize positioning of ribosome-bound tRNAs. This Thermoplasma acidophilum (strain ATCC 25905 / DSM 1728 / JCM 9062 / NBRC 15155 / AMRC-C165) protein is Large ribosomal subunit protein uL5.